The primary structure comprises 327 residues: Phenylalanine--tRNA ligase alpha subunit (327 aa).

E252 provides a ligand contact to Mg(2+).

The protein belongs to the class-II aminoacyl-tRNA synthetase family. Phe-tRNA synthetase alpha subunit type 1 subfamily. Tetramer of two alpha and two beta subunits. Mg(2+) serves as cofactor.

The protein resides in the cytoplasm. It carries out the reaction tRNA(Phe) + L-phenylalanine + ATP = L-phenylalanyl-tRNA(Phe) + AMP + diphosphate + H(+). This is Phenylalanine--tRNA ligase alpha subunit from Escherichia coli O127:H6 (strain E2348/69 / EPEC).